Here is a 351-residue protein sequence, read N- to C-terminus: Selenide, water dikinase (351 aa).

The active site involves C20. ATP-binding positions include K23 and 51–53 (TKD). Residue D54 coordinates Mg(2+). ATP contacts are provided by residues D71, D94, and 142 to 144 (GHS). Residue D94 coordinates Mg(2+). Residue D230 coordinates Mg(2+).

The protein belongs to the selenophosphate synthase 1 family. Class I subfamily. In terms of assembly, homodimer. The cofactor is Mg(2+).

It carries out the reaction hydrogenselenide + ATP + H2O = selenophosphate + AMP + phosphate + 2 H(+). Synthesizes selenophosphate from selenide and ATP. In Pasteurella multocida (strain Pm70), this protein is Selenide, water dikinase.